Here is a 637-residue protein sequence, read N- to C-terminus: Extracellular metalloproteinase 2 (637 aa).

An N-terminal signal peptide occupies residues 1-20 (MRSFLLASLASVATLKSAQA). Positions 21–244 (HPAHSTRGLS…VHAVVDYSAD (224 aa)) are excised as a propeptide. Asn-302, Asn-328, Asn-337, and Asn-413 each carry an N-linked (GlcNAc...) asparagine glycan. His-430 lines the Zn(2+) pocket. Glu-431 is an active-site residue. Residue His-434 coordinates Zn(2+).

Belongs to the peptidase M36 family. Zn(2+) serves as cofactor.

It is found in the secreted. Functionally, secreted metalloproteinase that allows assimilation of proteinaceous substrates. The sequence is that of Extracellular metalloproteinase 2 (MEP2) from Phaeosphaeria nodorum (strain SN15 / ATCC MYA-4574 / FGSC 10173) (Glume blotch fungus).